The sequence spans 459 residues: Pentatricopeptide repeat-containing protein At5g18390, mitochondrial (459 aa).

A mitochondrion-targeting transit peptide spans 1 to 7; it reads MLLLRRY. PPR repeat units lie at residues 110–144, 145–175, 181–215, 216–250, 251–285, 286–320, 321–355, 356–390, and 391–425; these read TSME…SLDI, SGET…VPKT, TVDV…GLKP, DKRT…GFNP, PARG…GFVP, DIQT…GLCV, DIDT…GHKP, FPSL…AHPP, and NRPV…GLVP.

It belongs to the PPR family. P subfamily.

Its subcellular location is the mitochondrion. The chain is Pentatricopeptide repeat-containing protein At5g18390, mitochondrial from Arabidopsis thaliana (Mouse-ear cress).